The following is a 606-amino-acid chain: MVISPSKKQAARRHTHSVKIGNLYVGSEHSIKMQSMTTTPTADVEATVTQICALVEAKCEIARVTVQGIKEAQACEHIKERLLSMGIAIPLVADIHFFPQAAMHVADFVDKVRINPGNFVDKRNMFTGKTYTDKNYADSLLRLEEKFTPLVEKCKRLGKAMRIGVNHGSLSERVMQRYGDTIEGMVVSALEYIEVCEKLGYRDVVFSMKSSNPKVMVAAYRQLAKDLDARGWHYPLHLGVTEAGIGLDGIIKSAVGIGTLLTEGLGDTIRCSLTGCPTTEIPVCESLLKHTTTYLDLPKKENPFALENSETFVNASKKITKATPWGSVYGVFIKLMKEHLLNNTVEKLLEQLGINPTNGKKDFTAPDGIIVPKSFIGTSVIEKLKEHLLVFHHHEVPCLYNHNEEIWNSEQVLSAPFVHCHATPPFIHSTREFFEKKQSNEQPVKLVFSKDLDDEFEAAVSIATEFGALLLDGLGEAVILDLPNVSLPTVREIAFSTLQSAGVRLVKTEYISCPGCGRTLFDLPEVTTRIREKTKHLVGLKIAVMGCIVNGPGEMADSDFGFVGSKTGMIDLYVKHTCVKAHIPMEDAEEELVRLLQEHGVWKDPE.

[4Fe-4S] cluster is bound by residues C513, C516, C547, and E554.

Belongs to the IspG family. It depends on [4Fe-4S] cluster as a cofactor.

The enzyme catalyses (2E)-4-hydroxy-3-methylbut-2-enyl diphosphate + oxidized [flavodoxin] + H2O + 2 H(+) = 2-C-methyl-D-erythritol 2,4-cyclic diphosphate + reduced [flavodoxin]. The protein operates within isoprenoid biosynthesis; isopentenyl diphosphate biosynthesis via DXP pathway; isopentenyl diphosphate from 1-deoxy-D-xylulose 5-phosphate: step 5/6. Its function is as follows. Converts 2C-methyl-D-erythritol 2,4-cyclodiphosphate (ME-2,4cPP) into 1-hydroxy-2-methyl-2-(E)-butenyl 4-diphosphate. This Chlamydia caviae (strain ATCC VR-813 / DSM 19441 / 03DC25 / GPIC) (Chlamydophila caviae) protein is 4-hydroxy-3-methylbut-2-en-1-yl diphosphate synthase (flavodoxin).